We begin with the raw amino-acid sequence, 173 residues long: Adenine phosphoribosyltransferase (173 aa).

Belongs to the purine/pyrimidine phosphoribosyltransferase family. As to quaternary structure, homodimer.

The protein resides in the cytoplasm. The enzyme catalyses AMP + diphosphate = 5-phospho-alpha-D-ribose 1-diphosphate + adenine. The protein operates within purine metabolism; AMP biosynthesis via salvage pathway; AMP from adenine: step 1/1. In terms of biological role, catalyzes a salvage reaction resulting in the formation of AMP, that is energically less costly than de novo synthesis. This is Adenine phosphoribosyltransferase from Caldanaerobacter subterraneus subsp. tengcongensis (strain DSM 15242 / JCM 11007 / NBRC 100824 / MB4) (Thermoanaerobacter tengcongensis).